We begin with the raw amino-acid sequence, 190 residues long: Pyridoxal 5'-phosphate synthase subunit PdxT (190 aa).

46–48 (GES) is an L-glutamine binding site. Cys78 (nucleophile) is an active-site residue. L-glutamine-binding positions include Arg108 and 137 to 138 (IR). Catalysis depends on charge relay system residues His174 and Glu176.

It belongs to the glutaminase PdxT/SNO family. As to quaternary structure, in the presence of PdxS, forms a dodecamer of heterodimers. Only shows activity in the heterodimer.

It carries out the reaction aldehydo-D-ribose 5-phosphate + D-glyceraldehyde 3-phosphate + L-glutamine = pyridoxal 5'-phosphate + L-glutamate + phosphate + 3 H2O + H(+). The catalysed reaction is L-glutamine + H2O = L-glutamate + NH4(+). It functions in the pathway cofactor biosynthesis; pyridoxal 5'-phosphate biosynthesis. In terms of biological role, catalyzes the hydrolysis of glutamine to glutamate and ammonia as part of the biosynthesis of pyridoxal 5'-phosphate. The resulting ammonia molecule is channeled to the active site of PdxS. The chain is Pyridoxal 5'-phosphate synthase subunit PdxT from Chloroflexus aurantiacus (strain ATCC 29366 / DSM 635 / J-10-fl).